The sequence spans 365 residues: Putative agmatine deiminase (365 aa).

Catalysis depends on Cys357, which acts as the Amidino-cysteine intermediate.

This sequence belongs to the agmatine deiminase family.

The catalysed reaction is agmatine + H2O = N-carbamoylputrescine + NH4(+). The polypeptide is Putative agmatine deiminase (Yersinia pseudotuberculosis serotype O:1b (strain IP 31758)).